Consider the following 370-residue polypeptide: Flagellar P-ring protein 1 (370 aa).

The N-terminal stretch at 1 to 25 is a signal peptide; that stretch reads MSVLIKTRHCFVLLGLWLVLPTASA.

Belongs to the FlgI family. In terms of assembly, the basal body constitutes a major portion of the flagellar organelle and consists of four rings (L,P,S, and M) mounted on a central rod.

The protein resides in the periplasm. Its subcellular location is the bacterial flagellum basal body. Its function is as follows. Assembles around the rod to form the L-ring and probably protects the motor/basal body from shearing forces during rotation. This is Flagellar P-ring protein 1 from Yersinia pestis.